Consider the following 300-residue polypeptide: Ribosomal protein bS6--L-glutamate ligase (300 aa).

In terms of domain architecture, ATP-grasp spans 104-287 (LQLLARQGID…IAGRMIQWIE (184 aa)). ATP is bound by residues Lys-141, 178 to 179 (EY), Asp-187, and 211 to 213 (RSN). Residues Asp-248, Glu-260, and Asn-262 each coordinate Mg(2+). 3 residues coordinate Mn(2+): Asp-248, Glu-260, and Asn-262.

This sequence belongs to the RimK family. Requires Mg(2+) as cofactor. The cofactor is Mn(2+).

In terms of biological role, an L-glutamate ligase that catalyzes the ATP-dependent post-translational addition of glutamate residues to the C-terminus of ribosomal protein bS6 (RpsF). Is also able to catalyze the synthesis of poly-alpha-glutamate in vitro, via ATP hydrolysis from unprotected glutamate as substrate. The number of glutamate residues added to either RpsF or to poly-alpha-glutamate changes with pH. The polypeptide is Ribosomal protein bS6--L-glutamate ligase (Salmonella schwarzengrund (strain CVM19633)).